Consider the following 732-residue polypeptide: Catalase-peroxidase (732 aa).

The segment at 1–26 (MDAKTDDQGGKCPFPHGGGSRGHRNR) is disordered. The segment at residues 97 to 219 (WHSAGTYRTT…LGAVQMGLIY (123 aa)) is a cross-link (tryptophyl-tyrosyl-methioninium (Trp-Tyr) (with M-245)). The active-site Proton acceptor is the H98. Positions 219 to 245 (YVNPEGPNGNPDPVAAAKDIRETFARM) form a cross-link, tryptophyl-tyrosyl-methioninium (Tyr-Met) (with W-97). H260 serves as a coordination point for heme b.

Belongs to the peroxidase family. Peroxidase/catalase subfamily. As to quaternary structure, homodimer or homotetramer. Requires heme b as cofactor. Post-translationally, formation of the three residue Trp-Tyr-Met cross-link is important for the catalase, but not the peroxidase activity of the enzyme.

The catalysed reaction is H2O2 + AH2 = A + 2 H2O. It catalyses the reaction 2 H2O2 = O2 + 2 H2O. Its function is as follows. Bifunctional enzyme with both catalase and broad-spectrum peroxidase activity. The sequence is that of Catalase-peroxidase from Rhodopseudomonas palustris (strain BisB5).